Consider the following 156-residue polypeptide: Ribonuclease pancreatic (156 aa).

The first 28 residues, 1–28, serve as a signal peptide directing secretion; that stretch reads MALEKSLVLLPLLVLILLVLGWVQPSLG. Substrate is bound by residues Lys35 and Arg38. The active-site Proton acceptor is the His40. 2 N-linked (GlcNAc...) asparagine glycosylation sites follow: Asn50 and Asn62. Cystine bridges form between Cys54/Cys112, Cys68/Cys123, Cys86/Cys138, and Cys93/Cys100. Substrate is bound by residues 69-73 and Lys94; that span reads KPVNT. N-linked (GlcNAc...) asparagine glycosylation is present at Asn104. Arg113 provides a ligand contact to substrate. His147 acts as the Proton donor in catalysis.

This sequence belongs to the pancreatic ribonuclease family. In terms of assembly, monomer. Interacts with and forms tight 1:1 complexes with RNH1. Dimerization of two such complexes may occur. Interaction with RNH1 inhibits this protein. As to expression, pancreas and other tissues and body fluids (indicating it may have other physiological functions besides its role in digestion).

It localises to the secreted. It catalyses the reaction an [RNA] containing cytidine + H2O = an [RNA]-3'-cytidine-3'-phosphate + a 5'-hydroxy-ribonucleotide-3'-[RNA].. The enzyme catalyses an [RNA] containing uridine + H2O = an [RNA]-3'-uridine-3'-phosphate + a 5'-hydroxy-ribonucleotide-3'-[RNA].. Functionally, endonuclease that catalyzes the cleavage of RNA on the 3' side of pyrimidine nucleotides. Acts on single-stranded and double-stranded RNA. This Pongo pygmaeus (Bornean orangutan) protein is Ribonuclease pancreatic (RNASE1).